Reading from the N-terminus, the 225-residue chain is LysM and putative peptidoglycan-binding domain-containing protein 1 (225 aa).

Ser23 and Ser33 each carry phosphoserine. A LysM domain is found at 40–84 (LEHQLAPGDTLAGLALKYGVTMEQIKRANRLYTNDSIFLKKTLHI). Positions 97-153 (LDSEEEKDGEEAVQPSKDEVRPHSAERKKRERGLGHANGEPLPTAGQEPARHDLSAS) are disordered. Acidic residues predominate over residues 98–107 (DSEEEKDGEE). Ser99 carries the phosphoserine modification. The segment covering 112 to 121 (SKDEVRPHSA) has biased composition (basic and acidic residues). 4 positions are modified to phosphoserine: Ser164, Ser179, Ser192, and Ser210. Residues 170-225 (AAQKLKKGESGIPGEDSSLHLSSPRMQQRAVLGPVPLTQTSRTRTLRDQEDEIFKL) form a disordered region. Residues 214–225 (TLRDQEDEIFKL) show a composition bias toward basic and acidic residues.

This Bos taurus (Bovine) protein is LysM and putative peptidoglycan-binding domain-containing protein 1 (LYSMD1).